A 332-amino-acid polypeptide reads, in one-letter code: Fructose-1,6-bisphosphatase class 1 (332 aa).

The Mg(2+) site is built by Glu94, Asp116, Leu118, and Asp119. Substrate contacts are provided by residues 119–122 (DGSS), Asn211, Tyr239, 257–259 (YLY), and Lys269. Glu275 is a Mg(2+) binding site.

It belongs to the FBPase class 1 family. In terms of assembly, homotetramer. Mg(2+) serves as cofactor.

It localises to the cytoplasm. It carries out the reaction beta-D-fructose 1,6-bisphosphate + H2O = beta-D-fructose 6-phosphate + phosphate. It functions in the pathway carbohydrate biosynthesis; Calvin cycle. The protein is Fructose-1,6-bisphosphatase class 1 of Synechococcus sp. (strain JA-3-3Ab) (Cyanobacteria bacterium Yellowstone A-Prime).